The primary structure comprises 248 residues: 3-deoxy-manno-octulosonate cytidylyltransferase (248 aa).

Belongs to the KdsB family.

The protein localises to the cytoplasm. It carries out the reaction 3-deoxy-alpha-D-manno-oct-2-ulosonate + CTP = CMP-3-deoxy-beta-D-manno-octulosonate + diphosphate. The protein operates within nucleotide-sugar biosynthesis; CMP-3-deoxy-D-manno-octulosonate biosynthesis; CMP-3-deoxy-D-manno-octulosonate from 3-deoxy-D-manno-octulosonate and CTP: step 1/1. It functions in the pathway bacterial outer membrane biogenesis; lipopolysaccharide biosynthesis. In terms of biological role, activates KDO (a required 8-carbon sugar) for incorporation into bacterial lipopolysaccharide in Gram-negative bacteria. In Cronobacter sakazakii (strain ATCC BAA-894) (Enterobacter sakazakii), this protein is 3-deoxy-manno-octulosonate cytidylyltransferase.